The primary structure comprises 322 residues: Methionyl-tRNA formyltransferase (322 aa).

113 to 116 (SLLP) provides a ligand contact to (6S)-5,6,7,8-tetrahydrofolate.

The protein belongs to the Fmt family.

It carries out the reaction L-methionyl-tRNA(fMet) + (6R)-10-formyltetrahydrofolate = N-formyl-L-methionyl-tRNA(fMet) + (6S)-5,6,7,8-tetrahydrofolate + H(+). Attaches a formyl group to the free amino group of methionyl-tRNA(fMet). The formyl group appears to play a dual role in the initiator identity of N-formylmethionyl-tRNA by promoting its recognition by IF2 and preventing the misappropriation of this tRNA by the elongation apparatus. This chain is Methionyl-tRNA formyltransferase, found in Blochmanniella pennsylvanica (strain BPEN).